A 520-amino-acid polypeptide reads, in one-letter code: Pentatricopeptide repeat-containing protein At1g28690, mitochondrial (520 aa).

The transit peptide at 1–19 directs the protein to the mitochondrion; it reads MRIFRFTSISPRILPSNHY. 11 PPR repeats span residues 68 to 98, 99 to 133, 134 to 168, 174 to 208, 209 to 235, 236 to 271, 272 to 306, 307 to 337, 338 to 372, 373 to 403, and 409 to 439; these read DLNISIKLLILHLKCGCLSYARQVFDELPKP, TLSAYNYMISGYLKHGLVKELLLLVQRMSYSGEKA, DGYTLSMVLKASNSRGSTMILPRSLCRLVHARIIK, DDVLITALVDTYVKSGKLESARTVFETMKDENVVC, CTSMISGYMNQGFVEDAEEIFNTTKVK, DIVVYNAMVEGFSRSGETAKRSVDMYISMQRAGFHP, NISTFASVIGACSVLTSHEVGQQVHAQIMKSGVYT, HIKMGSSLLDMYAKCGGINDARRVFDQMQEK, NVFSWTSMIDGYGKNGNPEEALELFTRMKEFRIEP, NYVTFLGALSACSHSGLVDKGYEIFESMQRD, and KMEHYACIVDLMGRAGDLNKAFEFARAMPER. A type E motif region spans residues 444-520; it reads IWAALLSSCN…TIGRSWTSED (77 aa).

This sequence belongs to the PPR family. PCMP-E subfamily.

Its subcellular location is the mitochondrion. The chain is Pentatricopeptide repeat-containing protein At1g28690, mitochondrial (PCMP-E34) from Arabidopsis thaliana (Mouse-ear cress).